Here is a 589-residue protein sequence, read N- to C-terminus: Guanylate-binding protein 2 (589 aa).

Positions 1–309 are GTPase domain (Globular); sequence MASEIHMLQP…GAISSGSLPC (309 aa). Residues 35-276 enclose the GB1/RHD3-type G domain; the sequence is NQPVVVVAIV…FTSYIFSYSA (242 aa). GTP is bound by residues 45-52, 181-182, and Leu-245; these read GLYRTGKS and RD. A Cysteine methyl ester modification is found at Cys-586. The S-geranylgeranyl cysteine moiety is linked to residue Cys-586. The propeptide at 587 to 589 is removed in mature form; that stretch reads TIL.

The protein belongs to the TRAFAC class dynamin-like GTPase superfamily. GB1/RHD3 GTPase family. GB1 subfamily. Homodimer; homodimerization occurs upon GTP-binding and is required for the association with membranous structures. Heterodimer with other family members, including GBP1, GBP3, GBP4 and GBP5. Isoprenylation is required for proper subcellular location. As to expression, widely expressed.

It is found in the cytoplasmic vesicle membrane. The protein resides in the golgi apparatus membrane. Its subcellular location is the cytoplasm. The protein localises to the perinuclear region. It catalyses the reaction GTP + H2O = GDP + phosphate + H(+). Interferon (IFN)-inducible GTPase that plays important roles in innate immunity against a diverse range of bacterial, viral and protozoan pathogens. Hydrolyzes GTP to GMP in 2 consecutive cleavage reactions, but the major reaction product is GDP. Following infection, recruited to the pathogen-containing vacuoles or vacuole-escaped bacteria and acts as a positive regulator of inflammasome assembly by promoting the release of inflammasome ligands from bacteria. Acts by promoting lysis of pathogen-containing vacuoles, releasing pathogens into the cytosol. Following pathogen release in the cytosol, promotes recruitment of proteins that mediate bacterial cytolysis: this liberates ligands that are detected by inflammasomes, such as lipopolysaccharide (LPS) that activates the non-canonical CASP4/CASP11 inflammasome or double-stranded DNA (dsDNA) that activates the AIM2 inflammasome. Confers protection to the protozoan pathogen Toxoplasma gondii. Independently of its GTPase activity, acts as an inhibitor of various viruses infectivity by inhibiting FURIN-mediated maturation of viral envelope proteins. The polypeptide is Guanylate-binding protein 2 (Gbp2) (Rattus norvegicus (Rat)).